The following is a 134-amino-acid chain: MDLRTGEYITAHQATSGVYTFEITNPLYFTITRHNQQPFNSKYNLLTFQIRFNHNLRKALGIHKCFLNFRIWTTLQSPTGHFLRVFRFQVYKYLNNIGVISLNNVIRAVDYVLFDVFENTIDVIEQHEIKYNLY.

Belongs to the geminiviridae replication enhancer protein family. In terms of assembly, homooligomer. Interacts with the replication-associated protein (REP). Interacts with host proliferating cell nuclear antigen (PCNA). Interacts with host retinoblastoma-related protein 1 (RBR1), and may thereby deregulate the host cell cycle. Oligomerization and interaction with PCNA are necessary for optimal replication enhancement.

Its function is as follows. Increases viral DNA accumulation. Enhances infectivity and symptom expression. This Solanum lycopersicum (Tomato) protein is Replication enhancer protein.